Here is a 1006-residue protein sequence, read N- to C-terminus: Transmembrane channel-like protein 5 (1006 aa).

The interval 1–289 (MSAYYRNNWS…DDPVGSLWGE (289 aa)) is disordered. Residues 1-458 (MSAYYRNNWS…YFNFLRWLLK (458 aa)) are Extracellular-facing. 3 stretches are compositionally biased toward polar residues: residues 20–30 (SGSQNRTQGYL), 50–59 (TRSNPYSVAS), and 76–101 (RSLS…SPDH). Residues 138 to 149 (AGSSSSGNYAGS) show a composition bias toward low complexity. The span at 239-250 (REPDYSDAENGH) shows a compositional bias: basic and acidic residues. Residues 459–479 (FNIFSFILNFSFIIIPQFTVA) traverse the membrane as a helical segment. Topologically, residues 480–485 (KKNTLQ) are cytoplasmic. Residues 486 to 508 (FTGLEFFTGVGYFRDTVMYYGFY) traverse the membrane as a helical segment. The Extracellular segment spans residues 509–525 (TNSTIQHGNSGASYNMQ). The helical transmembrane segment at 526-546 (LAYIFTIGACLTTCFFSLLFS) threads the bilayer. Over 547–619 (MAKYFRNNFI…NQLLTRFSAY (73 aa)) the chain is Cytoplasmic. Residues 620–640 (MVAWVVSTGVAIACCAAVYYL) form a helical membrane-spanning segment. Topologically, residues 641–654 (AEYNLEFLKTHSNP) are extracellular. A helical membrane pass occupies residues 655-675 (GAVLLLPFVVSCINLAVPCIY). The Cytoplasmic segment spans residues 676-698 (SMFRLVERYEMPRHEVYVLLIRN). The helical transmembrane segment at 699 to 719 (IFLKISIIGILCYYWLNTVAL) threads the bilayer. At 720 to 732 (SGEECWETLIGQD) the chain is on the extracellular side. A helical transmembrane segment spans residues 733 to 753 (IYRLLLMDFVFSLVNSFLGEF). The Cytoplasmic portion of the chain corresponds to 754 to 786 (LRRIIGMQLITSLGLQEFDIARNVLELIYAQTL). A helical membrane pass occupies residues 787-807 (VWIGIFFCPLLPFIQMIMLFI). Topologically, residues 808–835 (MFYSKNISLMMNFQPPSKAWRASQMMTF) are extracellular. A helical transmembrane segment spans residues 836 to 856 (FIFLLFFPSFTGVLCTLAITI). Residues 857-900 (WRLKPSADCGPFRGLPLFIHSIYSWIDTLSTRPGYLWVVWIYRN) lie on the Cytoplasmic side of the membrane. The helical transmembrane segment at 901-921 (LIGSVHFFFILTLIVLIITYL) threads the bilayer. The Extracellular segment spans residues 922-1006 (YWQITEGRKI…RSVQEGNPRA (85 aa)).

It belongs to the TMC family.

The protein resides in the membrane. Its function is as follows. Probable component of an ion channel. Molecular function hasn't been characterized yet. This Homo sapiens (Human) protein is Transmembrane channel-like protein 5.